We begin with the raw amino-acid sequence, 114 residues long: Hydrogenase maturation factor HypA (114 aa).

His2 provides a ligand contact to Ni(2+). Positions 73, 76, 89, and 92 each coordinate Zn(2+).

It belongs to the HypA/HybF family.

Involved in the maturation of [NiFe] hydrogenases. Required for nickel insertion into the metal center of the hydrogenase. The chain is Hydrogenase maturation factor HypA from Syntrophus aciditrophicus (strain SB).